We begin with the raw amino-acid sequence, 210 residues long: GRF1-interacting factor 1 (210 aa).

The segment covering 135 to 152 (ATLQHQQLHHSQLGMSSS) has biased composition (low complexity). A disordered region spans residues 135–210 (ATLQHQQLHH…LYLKSSDDGN (76 aa)). The span at 182–198 (GSGGGGEGRGGSSGDGG) shows a compositional bias: gly residues.

It belongs to the SS18 family. Interacts with GRF1, GRF2, GRF5 and GRF9. As to expression, strongly expressed in actively growing and developing tissues, such as roots, upper stems, and shoot tips and flower buds. Also expressed in mature flowers. Not expressed in the shoot apical meristem (SAM). Highly accumulated in the proximal part of leaf primordia, in the key proliferative zone at the junction region between the leaf blade and leaf petiole.

In terms of biological role, transcription coactivator that plays a role in the regulation of cell expansion in leaf and cotyledons tissues. Component of a network formed by miR396, the GRFs and their interacting factors (GIFs) acting in the regulation of meristem function, at least partially through the control of cell proliferation. Appears to function synergistically with GRF1 as a transcriptional coactivator. Acts together with GRF5 for the development of appropriate leaf size and shape through the promotion and/or maintenance of cell proliferation activity in leaf primordia. Plays a role in adaxial/abaxial patterning and growth in leaf morphogenesis. GIFs are involved in the positive regulation of cell proliferation of lateral organs in a functionally redundant manner. Together with GATA18/HAN, mediates cotyledon identity by preventing ectopic root formation through the repression of PLT1 expression. The sequence is that of GRF1-interacting factor 1 from Arabidopsis thaliana (Mouse-ear cress).